The following is a 551-amino-acid chain: Interleukin-2 receptor subunit beta (551 aa).

Positions 1–26 are cleaved as a signal peptide; it reads MAAPALSWRLPLLILLLPLATSWASA. Over 27 to 240 the chain is Extracellular; that stretch reads AVNGTSQFTC…TKPAALGKDT (214 aa). N-linked (GlcNAc...) asparagine glycans are attached at residues Asn29, Asn43, and Asn71. 3 cysteine pairs are disulfide-bonded: Cys36-Cys46, Cys59-Cys110, and Cys74-Cys86. In terms of domain architecture, Fibronectin type-III spans 134 to 234; that stretch reads APISLQVVHV…QPLAFRTKPA (101 aa). N-linked (GlcNAc...) asparagine glycosylation is present at Asn149. Positions 220–224 match the WSXWS motif motif; sequence WSPWS. Residues 241-265 form a helical membrane-spanning segment; the sequence is IPWLGHLLVGLSGAFGFIILVYLLI. Over 266-551 the chain is Cytoplasmic; sequence NCRNTGPWLK…LQGQDPTHLV (286 aa). The Box 1 motif motif lies at 278-286; the sequence is LKCNTPDPS. Disordered stretches follow at residues 389-416 and 432-486; these read EEDP…GEDD and PSLL…VDFQ.

This sequence belongs to the type I cytokine receptor family. Type 4 subfamily. Non-covalent dimer of an alpha and a beta subunit. IL2R exists in 3 different forms: a high affinity dimer, an intermediate affinity monomer (beta subunit), and a low affinity monomer (alpha subunit). The high and intermediate affinity forms also associate with a gamma subunit. Interacts with SHB upon interleukin stimulation. As to quaternary structure, (Microbial infection) Interacts with HTLV-1 accessory protein p12I.

The protein localises to the cell membrane. Its function is as follows. Receptor for interleukin-2. This beta subunit is involved in receptor mediated endocytosis and transduces the mitogenic signals of IL2. Probably in association with IL15RA, involved in the stimulation of neutrophil phagocytosis by IL15. This Homo sapiens (Human) protein is Interleukin-2 receptor subunit beta.